A 145-amino-acid chain; its full sequence is Putative pre-16S rRNA nuclease (145 aa).

Belongs to the YqgF nuclease family.

It localises to the cytoplasm. Its function is as follows. Could be a nuclease involved in processing of the 5'-end of pre-16S rRNA. This is Putative pre-16S rRNA nuclease from Prochlorococcus marinus (strain MIT 9211).